The following is a 220-amino-acid chain: Recombination protein RecR (220 aa).

The C4-type zinc-finger motif lies at 57 to 72 (CPICFNITDAEKCDVC). A Toprim domain is found at 80 to 173 (RTICVVEEPG…AISRIAYGVP (94 aa)). The interval 190-220 (LTGRQTVSKPQPPQRPGDEDGADGAAVPASR) is disordered.

The protein belongs to the RecR family.

May play a role in DNA repair. It seems to be involved in an RecBC-independent recombinational process of DNA repair. It may act with RecF and RecO. This is Recombination protein RecR from Deinococcus radiodurans (strain ATCC 13939 / DSM 20539 / JCM 16871 / CCUG 27074 / LMG 4051 / NBRC 15346 / NCIMB 9279 / VKM B-1422 / R1).